We begin with the raw amino-acid sequence, 128 residues long: Sulfurtransferase TusD (128 aa).

The Cysteine persulfide intermediate role is filled by C78.

Belongs to the DsrE/TusD family. As to quaternary structure, heterohexamer, formed by a dimer of trimers. The hexameric TusBCD complex contains 2 copies each of TusB, TusC and TusD. The TusBCD complex interacts with TusE.

Its subcellular location is the cytoplasm. Its function is as follows. Part of a sulfur-relay system required for 2-thiolation of 5-methylaminomethyl-2-thiouridine (mnm(5)s(2)U) at tRNA wobble positions. Accepts sulfur from TusA and transfers it in turn to TusE. This chain is Sulfurtransferase TusD, found in Salmonella arizonae (strain ATCC BAA-731 / CDC346-86 / RSK2980).